The primary structure comprises 875 residues: Lysine-specific demethylase 7A (875 aa).

The segment at 5 to 56 (PLYCVCRQPYDVNRFMIECDICKDWFHGSCVQVVEHHAADIDVYHCPNCEPI) adopts a PHD-type zinc-finger fold. Residues 197–353 (FSDTRMSNLV…MQLRCYEMER (157 aa)) enclose the JmjC domain. Residue Thr246 coordinates substrate. His249 and Asp251 together coordinate Fe cation. Lys266 contributes to the substrate binding site. Residue His321 coordinates Fe cation. Disordered regions lie at residues 442 to 506 (EDDS…SRKL), 629 to 710 (SQGE…NTDC), and 742 to 820 (QGNG…ATAK). The segment covering 448-462 (AVKTQGSAECSLSRS) has biased composition (polar residues). Residues 478–505 (QDHHHHRRRHHHHHHHHHHHHHHHHSRK) show a composition bias toward basic residues. The span at 650–663 (SDSKAGDSAEKCSL) shows a compositional bias: basic and acidic residues. The span at 688 to 697 (SHRHSHHKQA) shows a compositional bias: basic residues. The span at 742 to 762 (QGNGSSTSSSSDMWDSSEPCS) shows a compositional bias: low complexity.

The protein belongs to the JHDM1 histone demethylase family. JHDM1D subfamily. The cofactor is Fe(2+). In terms of tissue distribution, predominantly expressed in brain.

It localises to the nucleus. Its function is as follows. Histone demethylase required for brain development. Specifically demethylates dimethylated 'Lys-9' and 'Lys-27' (H3K9me2 and H3K27me2, respectively) of histone H3 and monomethylated histone H4 'Lys-20' residue (H4K20Me1), thereby playing a central role in histone code. The sequence is that of Lysine-specific demethylase 7A (kdm7a) from Danio rerio (Zebrafish).